Here is a 307-residue protein sequence, read N- to C-terminus: Ornithine carbamoyltransferase (307 aa).

Carbamoyl phosphate is bound by residues 54–57 (STRT), glutamine 81, arginine 105, and 132–135 (HPCQ). L-ornithine is bound by residues asparagine 163, aspartate 221, and 225–226 (SM). Residues 261-262 (CL) and arginine 289 contribute to the carbamoyl phosphate site.

It belongs to the aspartate/ornithine carbamoyltransferase superfamily. OTCase family.

It is found in the cytoplasm. The catalysed reaction is carbamoyl phosphate + L-ornithine = L-citrulline + phosphate + H(+). Its pathway is amino-acid biosynthesis; L-arginine biosynthesis; L-arginine from L-ornithine and carbamoyl phosphate: step 1/3. Reversibly catalyzes the transfer of the carbamoyl group from carbamoyl phosphate (CP) to the N(epsilon) atom of ornithine (ORN) to produce L-citrulline. The chain is Ornithine carbamoyltransferase from Chromobacterium violaceum (strain ATCC 12472 / DSM 30191 / JCM 1249 / CCUG 213 / NBRC 12614 / NCIMB 9131 / NCTC 9757 / MK).